The primary structure comprises 143 residues: Large ribosomal subunit protein uL11 (143 aa).

This sequence belongs to the universal ribosomal protein uL11 family. As to quaternary structure, part of the ribosomal stalk of the 50S ribosomal subunit. Interacts with L10 and the large rRNA to form the base of the stalk. L10 forms an elongated spine to which L12 dimers bind in a sequential fashion forming a multimeric L10(L12)X complex. One or more lysine residues are methylated.

Forms part of the ribosomal stalk which helps the ribosome interact with GTP-bound translation factors. In Rhizobium johnstonii (strain DSM 114642 / LMG 32736 / 3841) (Rhizobium leguminosarum bv. viciae), this protein is Large ribosomal subunit protein uL11.